The following is a 206-amino-acid chain: Small ribosomal subunit protein uS4 (206 aa).

The 63-residue stretch at 96 to 158 (SRLDNVVYRM…AKKQLRIQNA (63 aa)) folds into the S4 RNA-binding domain.

It belongs to the universal ribosomal protein uS4 family. In terms of assembly, part of the 30S ribosomal subunit. Contacts protein S5. The interaction surface between S4 and S5 is involved in control of translational fidelity.

One of the primary rRNA binding proteins, it binds directly to 16S rRNA where it nucleates assembly of the body of the 30S subunit. Functionally, with S5 and S12 plays an important role in translational accuracy. This chain is Small ribosomal subunit protein uS4, found in Francisella tularensis subsp. tularensis (strain FSC 198).